The following is a 139-amino-acid chain: MAKTIKDIKAMVEQAAIQSIHKSSSNVKQIMVKTGQEHIVEDVYGAYDPLLYERTGQVKDAFITTNESNGVSLDNIREDDGKDIATVIETGQGYTYPDSYGYGYGNPRPFMKNTSETLRDGRLTAALKKDLKADGIKTD.

This Bacillus subtilis (strain 168) protein is SPbeta prophage-derived uncharacterized protein YomN (yomN).